A 545-amino-acid polypeptide reads, in one-letter code: Methionine--tRNA ligase (545 aa).

A 'HIGH' region motif is present at residues 13–23 (PYANGPLHIGH). Zn(2+)-binding residues include C144, C147, C157, and C160. Residues 330-334 (KISKS) carry the 'KMSKS' region motif. Position 333 (K333) interacts with ATP.

It belongs to the class-I aminoacyl-tRNA synthetase family. MetG type 1 subfamily. Monomer. Zn(2+) is required as a cofactor.

The protein resides in the cytoplasm. The enzyme catalyses tRNA(Met) + L-methionine + ATP = L-methionyl-tRNA(Met) + AMP + diphosphate. Its function is as follows. Is required not only for elongation of protein synthesis but also for the initiation of all mRNA translation through initiator tRNA(fMet) aminoacylation. The chain is Methionine--tRNA ligase from Blochmanniella floridana.